Consider the following 386-residue polypeptide: 2-deoxy-scyllo-inosose synthase (386 aa).

NAD(+)-binding positions include D42, 73–76, 105–109, 129–130, 140–142, and 151–152; these read EVHK, GITGN, TT, SLK, and KN. Residue K142 is part of the active site. E184 provides a ligand contact to Co(2+). The active site involves E244. Co(2+) is bound by residues H247 and H263.

Belongs to the sugar phosphate cyclases superfamily. DOI synthase family. Requires NAD(+) as cofactor. Co(2+) is required as a cofactor.

The catalysed reaction is D-glucose 6-phosphate = 2-deoxy-L-scyllo-inosose + phosphate. It participates in metabolic intermediate biosynthesis; 2-deoxystreptamine biosynthesis; 2-deoxystreptamine from D-glucose 6-phosphate: step 1/4. The protein operates within antibiotic biosynthesis; paromomycin biosynthesis. Its function is as follows. Catalyzes the intramolecular carbocycle formation from D-glucose-6-phosphate to 2-deoxy-scyllo-inosose (DOI). In Streptomyces paromomycinus (Streptomyces rimosus subsp. paromomycinus), this protein is 2-deoxy-scyllo-inosose synthase (parC).